We begin with the raw amino-acid sequence, 47 residues long: Short transmembrane mitochondrial protein 1 (47 aa).

Residues G7 to D23 traverse the membrane as a helical segment.

It belongs to the STMP1 family. Interacts with components of the ubiquinol-cytochrome c oxidoreductase (cytochrome b-c1 complex, complex III, CIII), such as UQCRC1/QCR1, UQCRC2/QCR2 and UQCR10/QCR9. Interacts with components of the cytochrome c oxidase (mitochondrial respiratory chain complex IV) complex, such as MT-CO2. In terms of tissue distribution, expressed in monocytes and dendritic cells.

The protein resides in the mitochondrion inner membrane. The protein localises to the mitochondrion outer membrane. It is found in the mitochondrion intermembrane space. Its function is as follows. Microprotein involved in mitochondrial respiratory chain complex III (ubiquinol-cytochrome c oxidoreductase) and complex IV (mitochondrial cytochrome c oxidase complex) assembly. Required for the formation of mitochondrial supercomplexes (SCs). Also required for the activation of the NLRP3 inflammasome. This is Short transmembrane mitochondrial protein 1 from Homo sapiens (Human).